Here is a 1021-residue protein sequence, read N- to C-terminus: Collagenase ColH (1021 aa).

Positions 1–30 (MKRKCLSKRLMLAITMATIFTVNSTLPIYA) are cleaved as a signal peptide. The propeptide occupies 31–40 (AVDKNNATAA). An activator domain region spans residues 41 to 320 (VQNESKRYTV…SADQIKRHYD (280 aa)). The interval 41–717 (VQNESKRYTV…TYDVVFHGYL (677 aa)) is S1 metalloprotease domain. Residues 330–601 (PLDKFKKEGK…MQERIDNYEN (272 aa)) are catalytic subdomain. Aspartate 421 is a Zn(2+) binding site. Glutamate 430 lines the Ca(2+) pocket. Position 455 (histidine 455) interacts with Zn(2+). Glutamate 456 is an active-site residue. Histidine 459 provides a ligand contact to Zn(2+). Positions 463, 467, and 469 each coordinate Ca(2+). A Zn(2+)-binding site is contributed by glutamate 487. The segment at 609 to 721 (DDYLVRHAYK…VFHGYLPNEG (113 aa)) is helper subdomain. The segment at 718–810 (PNEGDSKNSL…VSTTTAEIKD (93 aa)) is S2a domain. Residues asparagine 725, serine 726, aspartate 753, aspartate 755, aspartate 794, asparagine 814, lysine 815, aspartate 842, aspartate 844, aspartate 884, glutamate 908, glutamate 910, asparagine 912, asparagine 913, threonine 931, aspartate 937, glutamine 938, and aspartate 939 each contribute to the Ca(2+) site. Positions 727 to 808 (LPYGKINGTY…SSVSTTTAEI (82 aa)) constitute a PKD 1 domain. The tract at residues 811–904 (LSENKLPVIY…KIKITDPVYP (94 aa)) is S2b domain. Positions 816 to 905 (LPVIYMHVPK…IKITDPVYPI (90 aa)) constitute a PKD 2 domain. A disordered region spans residues 903–922 (YPIGTEKEPNNSKETASGPI). The tract at residues 905–1021 (IGTEKEPNNS…RINIEGSVGR (117 aa)) is S3 collagen-binding domain. The segment at 1002-1004 (YMF) is collagen-binding.

The protein belongs to the peptidase M9B family. Collagenase subfamily. Ca(2+) is required as a cofactor. Zn(2+) serves as cofactor. Upon purification gives rise to 98 kDa, 105 kDa and 116 kDa (full-length) proteins, all of which have the same N-terminus.

It is found in the secreted. It catalyses the reaction Digestion of native collagen in the triple helical region at Xaa-|-Gly bonds. With synthetic peptides, a preference is shown for Gly at P3 and P1', Pro and Ala at P2 and P2', and hydroxyproline, Ala or Arg at P3'.. Its activity is regulated as follows. Inhibited by EDTA. Inhibited by 1-10-phenanthroline. Inhibited by broad-spectrum zinc metalloprotease inhibitor batimastat. N-aryl mercaptoacetamide-based inhibitors have been isolated that act on clostridial collagenases with submicromolar affinity while having negligibile activity on human collagenases. Clostridial collagenases are among the most efficient degraders of eukaryotic collagen known; saprophytes use collagen as a carbon source while pathogens additionally digest collagen to aid in host colonization. Has both tripeptidylcarboxypeptidase on Gly-X-Y and endopeptidase activities; the endopeptidase cuts within the triple helix region of collagen while tripeptidylcarboxypeptidase successively digests the exposed ends, thus clostridial collagenases can digest large sections of collagen. The full-length protein has collagenase activity, while both the 116 kDa and 98 kDa forms act on gelatin. In vitro digestion of soluble calf skin collagen fibrils requires both ColG and ColH; ColG forms missing the second collagen-binding domain is also synergistic with ColH, although their overall efficiency is decreased. Digestion of collagen requires Ca(2+) and is inhibited by EDTA. The activator domain (residues 119-388) and catalytic subdomain (330-601) open and close around substrate allowing digestion when the protein is closed. The sequence is that of Collagenase ColH from Hathewaya histolytica (Clostridium histolyticum).